Consider the following 324-residue polypeptide: tRNA-modifying protein YgfZ (324 aa).

Trp-184 lines the folate pocket.

It belongs to the tRNA-modifying YgfZ family.

It localises to the cytoplasm. Folate-binding protein involved in regulating the level of ATP-DnaA and in the modification of some tRNAs. It is probably a key factor in regulatory networks that act via tRNA modification, such as initiation of chromosomal replication. The polypeptide is tRNA-modifying protein YgfZ (Vibrio vulnificus (strain YJ016)).